Reading from the N-terminus, the 179-residue chain is CMT1A duplicated region transcript 4 protein homolog (179 aa).

Residues 1–15 (MISRPESSLSGLESS) are compositionally biased toward low complexity. Residues 1-20 (MISRPESSLSGLESSQEVQK) are disordered.

The polypeptide is CMT1A duplicated region transcript 4 protein homolog (Cdrt4) (Mus musculus (Mouse)).